The sequence spans 211 residues: Putative F-box protein At1g52490 (211 aa).

The F-box domain maps to 12–59 (EEEYLQLPLDLIVEILKKLPLKSLVRFRCVSKQFSTIICSLRDFIESV).

This chain is Putative F-box protein At1g52490, found in Arabidopsis thaliana (Mouse-ear cress).